The primary structure comprises 246 residues: Type III pantothenate kinase (246 aa).

6 to 13 (DVGNSRIK) contacts ATP. Residues tyrosine 93 and 100–103 (GSDR) each bind substrate. The active-site Proton acceptor is aspartate 102. Threonine 125 contributes to the ATP binding site. Threonine 175 is a substrate binding site.

Belongs to the type III pantothenate kinase family. As to quaternary structure, homodimer. Requires NH4(+) as cofactor. The cofactor is K(+).

The protein resides in the cytoplasm. The catalysed reaction is (R)-pantothenate + ATP = (R)-4'-phosphopantothenate + ADP + H(+). It functions in the pathway cofactor biosynthesis; coenzyme A biosynthesis; CoA from (R)-pantothenate: step 1/5. Its function is as follows. Catalyzes the phosphorylation of pantothenate (Pan), the first step in CoA biosynthesis. The sequence is that of Type III pantothenate kinase from Dichelobacter nodosus (strain VCS1703A).